Reading from the N-terminus, the 182-residue chain is Succinate dehydrogenase [ubiquinone] cytochrome b small subunit, mitochondrial (182 aa).

Residues 1-71 are Mitochondrial matrix-facing; sequence MSLSLLLRGA…SAPRMASAGS (71 aa). A helical transmembrane segment spans residues 72 to 96; it reads SHTLLWTVERIVSAGLLAVIPAAFI. Topologically, residues 97 to 101 are mitochondrial intermembrane; the sequence is APSQV. The chain crosses the membrane as a helical span at residues 102-122; sequence LDALMAISVVIHTHWGVEAMV. His-113 is a heme binding site. Topologically, residues 123-135 are mitochondrial matrix; sequence VDYMRPSVVGNVL. Position 125 (Tyr-125) interacts with a ubiquinone. A helical membrane pass occupies residues 136-157; sequence PKVAHIALIIISVATLGGLFYF. Over 158-182 the chain is Mitochondrial intermembrane; that stretch reads IQNDVGLANGIKRFWAIKGKDAEKA.

Belongs to the CybS family. In terms of assembly, forms part of complex II containing four subunits: a flavoprotein (FP), an iron-sulfur protein (IP) and a cytochrome b composed of a large and a small subunit.

It localises to the mitochondrion inner membrane. It participates in carbohydrate metabolism; tricarboxylic acid cycle. In terms of biological role, membrane-anchoring subunit of succinate dehydrogenase (SDH) that is involved in complex II of the mitochondrial electron transport chain and is responsible for transferring electrons from succinate to ubiquinone (coenzyme Q). The polypeptide is Succinate dehydrogenase [ubiquinone] cytochrome b small subunit, mitochondrial (Drosophila melanogaster (Fruit fly)).